Here is an 801-residue protein sequence, read N- to C-terminus: Phosphorus acquisition-controlling protein (801 aa).

4 disordered regions span residues 292 to 317, 366 to 607, 628 to 725, and 756 to 801; these read GSSP…DLAR, APSQ…SAGA, NTVP…ASTV, and MKMQ…AMDE. The segment covering 374–386 has biased composition (low complexity); the sequence is PLTPLIPTSSSST. Composition is skewed to polar residues over residues 387-401 and 459-472; these read AGVT…SPEN and KLSS…SVVG. Residues 446 to 540 form an interaction with negative regulatory factor region; sequence PGIASPATPA…PPSPAVAKPL (95 aa). Residues 477–486 are compositionally biased toward basic and acidic residues; the sequence is DPMDPDHIEN. Positions 535-554 are enriched in low complexity; the sequence is AVAKPLALPSAALSSPQLKP. Residues 637–646 are compositionally biased toward polar residues; sequence SELSTNLTSK. The 91-residue stretch at 645-735 folds into the bHLH domain; that stretch reads SKRTSHKIAE…EMAIEYIKQL (91 aa). Over residues 676-687 the composition is skewed to basic and acidic residues; the sequence is PAKEGGDGDGDG. A compositionally biased stretch (gly residues) spans 690–699; it reads SSGGGGGSGG. Residues 700–713 show a composition bias toward basic and acidic residues; sequence ADREDKREKDKDKA. The segment covering 765 to 777 has biased composition (low complexity); the sequence is GSGSSVGDAGDLG.

As to quaternary structure, binds DNA as a dimer.

It localises to the nucleus. Factor that activates the transcription of structural genes for phosphorus acquisition. The sequence is that of Phosphorus acquisition-controlling protein (nuc-1) from Neurospora crassa (strain ATCC 24698 / 74-OR23-1A / CBS 708.71 / DSM 1257 / FGSC 987).